We begin with the raw amino-acid sequence, 474 residues long: 3-isopropylmalate dehydratase large subunit (474 aa).

[4Fe-4S] cluster-binding residues include C352, C413, and C416.

The protein belongs to the aconitase/IPM isomerase family. LeuC type 1 subfamily. In terms of assembly, heterodimer of LeuC and LeuD. [4Fe-4S] cluster serves as cofactor.

It catalyses the reaction (2R,3S)-3-isopropylmalate = (2S)-2-isopropylmalate. It participates in amino-acid biosynthesis; L-leucine biosynthesis; L-leucine from 3-methyl-2-oxobutanoate: step 2/4. Its function is as follows. Catalyzes the isomerization between 2-isopropylmalate and 3-isopropylmalate, via the formation of 2-isopropylmaleate. This Pseudomonas savastanoi pv. phaseolicola (strain 1448A / Race 6) (Pseudomonas syringae pv. phaseolicola (strain 1448A / Race 6)) protein is 3-isopropylmalate dehydratase large subunit.